Here is a 557-residue protein sequence, read N- to C-terminus: Probable phenylalanine--tRNA ligase beta subunit (557 aa).

A B5 domain is found at 276–352 (MHNRSYVMGL…IAHGFNNFRR (77 aa)). Residues Asp-330, Asp-336, Glu-339, and Asp-340 each coordinate Mg(2+).

It belongs to the phenylalanyl-tRNA synthetase beta subunit family. Type 2 subfamily. In terms of assembly, tetramer of two alpha and two beta subunits. Mg(2+) serves as cofactor.

The protein localises to the cytoplasm. It carries out the reaction tRNA(Phe) + L-phenylalanine + ATP = L-phenylalanyl-tRNA(Phe) + AMP + diphosphate + H(+). The sequence is that of Probable phenylalanine--tRNA ligase beta subunit from Encephalitozoon cuniculi (strain GB-M1) (Microsporidian parasite).